Consider the following 304-residue polypeptide: ATP phosphoribosyltransferase (304 aa).

Belongs to the ATP phosphoribosyltransferase family. Long subfamily. Mg(2+) is required as a cofactor.

The protein resides in the cytoplasm. The enzyme catalyses 1-(5-phospho-beta-D-ribosyl)-ATP + diphosphate = 5-phospho-alpha-D-ribose 1-diphosphate + ATP. It participates in amino-acid biosynthesis; L-histidine biosynthesis; L-histidine from 5-phospho-alpha-D-ribose 1-diphosphate: step 1/9. Feedback inhibited by histidine. Its function is as follows. Catalyzes the condensation of ATP and 5-phosphoribose 1-diphosphate to form N'-(5'-phosphoribosyl)-ATP (PR-ATP). Has a crucial role in the pathway because the rate of histidine biosynthesis seems to be controlled primarily by regulation of HisG enzymatic activity. The chain is ATP phosphoribosyltransferase from Xanthomonas campestris pv. campestris (strain B100).